The primary structure comprises 180 residues: Formate hydrogenlyase subunit 6 (180 aa).

4Fe-4S ferredoxin-type domains follow at residues 31 to 60 (GKPE…VETD) and 66 to 95 (LAWE…LSQE). The [4Fe-4S] cluster site is built by Cys-40, Cys-43, Cys-46, Cys-50, Cys-75, Cys-78, Cys-81, and Cys-85.

FHL comprises of a formate dehydrogenase, unidentified electron carriers and a hydrogenase (isoenzyme 3). In this non-energy conserving pathway, molecular hydrogen and carbodioxide are released from formate.

Probable electron transfer protein for hydrogenase 3. The chain is Formate hydrogenlyase subunit 6 (hycF) from Escherichia coli (strain K12).